The following is a 66-amino-acid chain: FMRFamide-like neuropeptides 24 (66 aa).

The signal sequence occupies residues 1-22; it reads MSRTSIILVLAIFVAIAAIAQC. Residues 23–48 constitute a propeptide that is removed on maturation; the sequence is RNIQYDVDEISPEAAFRYAQWGEIPH. Phe61 carries the phenylalanine amide modification. Positions 65–66 are excised as a propeptide; it reads SV.

Belongs to the FARP (FMRFamide related peptide) family.

Its subcellular location is the secreted. Functionally, FMRFamides and FMRFamide-like peptides are neuropeptides. The polypeptide is FMRFamide-like neuropeptides 24 (Caenorhabditis briggsae).